The primary structure comprises 256 residues: RNA polymerase sigma factor SigI1 (256 aa).

The Polymerase core binding signature appears at 67–80 (DEFSIALSAFNEAI). The H-T-H motif DNA-binding region spans 205–224 (RNELKKKAKVHGRTIGNNRK).

It belongs to the sigma-70 factor family. SigI subfamily. As to quaternary structure, interacts with RsgI1.

Its subcellular location is the cytoplasm. With respect to regulation, negatively regulated by the anti-sigma-I factor RsgI1. Binding of the polysaccharide substrate to RsgI1 may lead to the release and activation of SigI1. Functionally, sigma factors are initiation factors that promote the attachment of RNA polymerase to specific initiation sites and are then released. This sigma factor is involved in regulation of cellulosomal genes via an external polysaccharide-sensing mechanism. SigI1 promotes transcription from sigI1 and celS promoters. This is RNA polymerase sigma factor SigI1 from Acetivibrio thermocellus (strain ATCC 27405 / DSM 1237 / JCM 9322 / NBRC 103400 / NCIMB 10682 / NRRL B-4536 / VPI 7372) (Clostridium thermocellum).